Consider the following 389-residue polypeptide: Protein WALLS ARE THIN 1 (389 aa).

The next 10 helical transmembrane spans lie at 18–38, 49–69, 76–96, 111–131, 143–163, 198–218, 230–250, 266–286, 294–314, and 319–339; these read LQLHIAMLTLQFGYAGFHVVS, LVFPVYRNIIALLLLLPFAYF, PAITLNFLIQFFFLALIGITA, TFASSMQNSVPAITFLMAALL, GISKILGTALCVAGASVITLY, WTLGCIYLIGHCLSWSGWLVF, LSVTSYTCFFGIIQFLIIAAF, LFTILYAGIVASGIAFAVQIW, VFVAVYQPVQTLVVAIMASIA, and FYLGGIIGAVLIIAGLYFVLY. 2 EamA domains span residues 32-161 and 210-339; these read AGFH…SVIT and LSWS…FVLY. The residue at position 372 (Ser-372) is a Phosphoserine.

This sequence belongs to the drug/metabolite transporter (DMT) superfamily. Plant drug/metabolite exporter (P-DME) (TC 2.A.7.4) family. Mostly expressed in stems and hypocotyls, also present in seedlings, root, leaves, flowers and siliques. Ubiquitous, mostly expressed in vascular tissues and secondary wall-forming cells, including developing xylem vessels and fibers.

The protein resides in the vacuole membrane. Required for secondary wall formation in fibers, especially in short days conditions. Promotes indole metabolism and transport (e.g. tryptophan, neoglucobrassicin and auxin (indole-3-acetic acid)). May prevent salicylic-acid (SA) accumulation. The protein is Protein WALLS ARE THIN 1 (WAT1) of Arabidopsis thaliana (Mouse-ear cress).